The sequence spans 73 residues: MKADIHPDYHLIEVKMTDGTTYQVRSTWGKEGDTMSLDIDPNSHPAWTGGSAKLMDTGGRVSKFKNKYAGLGF.

The protein belongs to the bacterial ribosomal protein bL31 family. Type A subfamily. In terms of assembly, part of the 50S ribosomal subunit.

Functionally, binds the 23S rRNA. The polypeptide is Large ribosomal subunit protein bL31 (Paracoccus denitrificans (strain Pd 1222)).